A 705-amino-acid polypeptide reads, in one-letter code: Putative membrane protein SCO0839 (705 aa).

The next 12 helical transmembrane spans lie at 16 to 36 (WLVP…LGPY), 177 to 197 (GIDG…LLLV), 202 to 222 (LLPL…CAIV), 237 to 257 (VQGI…LLLT), 281 to 301 (SWGA…ALLL), 316 to 336 (IGIV…LVLL), 373 to 393 (IWAL…TLSS), 529 to 549 (LIVP…LRSL), 554 to 574 (LLVA…ALVF), 587 to 607 (VPLY…IFLM), 627 to 647 (LTAT…TFAA), and 648 to 668 (LGVI…FGVL).

This sequence belongs to the resistance-nodulation-cell division (RND) (TC 2.A.6) family. MmpL subfamily.

The protein resides in the cell membrane. This is Putative membrane protein SCO0839 from Streptomyces coelicolor (strain ATCC BAA-471 / A3(2) / M145).